A 196-amino-acid chain; its full sequence is Imidazoleglycerol-phosphate dehydratase (196 aa).

Belongs to the imidazoleglycerol-phosphate dehydratase family.

It is found in the cytoplasm. It catalyses the reaction D-erythro-1-(imidazol-4-yl)glycerol 3-phosphate = 3-(imidazol-4-yl)-2-oxopropyl phosphate + H2O. The protein operates within amino-acid biosynthesis; L-histidine biosynthesis; L-histidine from 5-phospho-alpha-D-ribose 1-diphosphate: step 6/9. The polypeptide is Imidazoleglycerol-phosphate dehydratase (Clostridium botulinum (strain Kyoto / Type A2)).